A 475-amino-acid polypeptide reads, in one-letter code: MESKALLLVALGMWFQSLTATRGGVAAADRGGDFIDIESKFALRTPEDTAEDTCHLIPGVTESVANCHFNHSSKTFVVIHGWTVTGMYESWVPKLVAALYKREPDSNVIVVDWLSRAQQHYPVSAGYTKLVGKDVAKFINWMAEEFHYPLDNVHLLGYSLGAHAAGIAGSLTNKKVNRITGLDPAGPNFEYAEAPSRLSPDDADFVDVLHTFTRGSPGRSIGIQKPVGHVDIYPNGGTFQPGCNIGEAIRVIAERGLGDVDQLVKCSHERSIHLFIDSLLNEENPSKAYRCNSKEAFEKGLCLSCRKNRCNNLGYEINKVRAKRSSKMYLKTRSQMPYKVFHYQVKIHFSGTESDTQTNQAFEISLYGTVAESENIPFTLPEVSANKTYSFLIYTEVDIGELLMLKLKWKSDSYFSWSDWWSSPGFAIEKIRVKAGETQKKVIFCSREKVSHLQKGKASVVFVKCHDKSLNKKSG.

The signal sequence occupies residues 1–27 (MESKALLLVALGMWFQSLTATRGGVAA). The tract at residues 32 to 53 (GDFIDIESKFALRTPEDTAEDT) is interaction with GPIHBP1. A disulfide bridge connects residues cysteine 54 and cysteine 67. N-linked (GlcNAc...) asparagine glycosylation is present at asparagine 70. Tyrosine 121 is modified (3'-nitrotyrosine). Serine 159 serves as the catalytic Nucleophile. The Charge relay system role is filled by aspartate 183. A 3'-nitrotyrosine modification is found at tyrosine 191. The Ca(2+) site is built by alanine 194, arginine 197, serine 199, and aspartate 202. Residues cysteine 243 and cysteine 266 are joined by a disulfide bond. Histidine 268 serves as the catalytic Charge relay system. Cystine bridges form between cysteine 291–cysteine 310 and cysteine 302–cysteine 305. The PLAT domain maps to 341 to 464 (FHYQVKIHFS…KGKASVVFVK (124 aa)). At tyrosine 343 the chain carries 3'-nitrotyrosine. N-linked (GlcNAc...) asparagine glycosylation occurs at asparagine 386. Residues 417–421 (WSDWW) are important for interaction with lipoprotein particles. Residues 430–434 (KIRVK) form an important for heparin binding region. The interaction with GPIHBP1 stretch occupies residues 443-467 (IFCSREKVSHLQKGKASVVFVKCHD). Residues cysteine 445 and cysteine 465 are joined by a disulfide bond.

The protein belongs to the AB hydrolase superfamily. Lipase family. Homodimer. Interacts with GPIHBP1 with 1:1 stoichiometry. Interacts with APOC2; the interaction activates LPL activity in the presence of lipids. Interaction with heparan sulfate proteoglycans is required to protect LPL against loss of activity. Associates with lipoprotein particles in blood plasma. Interacts with LMF1 and SEL1L; interaction with SEL1L is required to prevent aggregation of newly synthesized LPL in the endoplasmic reticulum (ER), and for normal export of LPL from the ER to the extracellular space. Interacts with SORL1; SORL1 acts as a sorting receptor, promoting LPL localization to endosomes and later to lysosomes, leading to degradation of newly synthesized LPL. In terms of processing, tyrosine nitration after lipopolysaccharide (LPS) challenge down-regulates the lipase activity.

Its subcellular location is the cell membrane. It is found in the secreted. The protein resides in the extracellular space. It localises to the extracellular matrix. It carries out the reaction a triacylglycerol + H2O = a diacylglycerol + a fatty acid + H(+). Its activity is regulated as follows. The apolipoprotein APOC2 acts as a coactivator of LPL activity. Ca(2+) binding promotes protein stability and formation of the active homodimer. Interaction with GPIHBP1 protects LPL against inactivation by ANGPTL4. In terms of biological role, key enzyme in triglyceride metabolism. Catalyzes the hydrolysis of triglycerides from circulating chylomicrons and very low density lipoproteins (VLDL), and thereby plays an important role in lipid clearance from the blood stream, lipid utilization and storage. Mediates margination of triglyceride-rich lipoprotein particles in capillaries. Recruited to its site of action on the luminal surface of vascular endothelium by binding to GPIHBP1 and cell surface heparan sulfate proteoglycans. This chain is Lipoprotein lipase (LPL), found in Neovison vison (American mink).